Consider the following 612-residue polypeptide: Protein hinderin (612 aa).

Position 20 is a phosphoserine (Ser20). Positions 90–166 form a coiled coil; sequence LKDLCLEDKR…CQELLSLYQK (77 aa). Ser178 carries the post-translational modification Phosphoserine. Positions 362–406 form a coiled coil; that stretch reads IEKQLSEDRRQQLMLQKMELEIEKERLQHLLAQQETKLLLKQQQL. Over residues 462 to 477 the composition is skewed to polar residues; that stretch reads STSFKKCPDSPNSGQN. 2 disordered regions span residues 462-484 and 509-598; these read STSF…KKTV and ETVT…RSPE. 3 positions are modified to phosphoserine: Ser471, Ser527, and Ser558. 2 stretches are compositionally biased toward polar residues: residues 555 to 568 and 575 to 585; these read QSLS…SQPH and TWSTLRPTPQK.

Interacts (via N- and C-terminal domains) with SMC3 (via central hinge region).

Functionally, competes with SMC1 for binding to SMC3. May affect the availability of SMC3 to engage in the formation of multimeric protein complexes. The chain is Protein hinderin (Kiaa1328) from Mus musculus (Mouse).